We begin with the raw amino-acid sequence, 815 residues long: Bifunctional aspartokinase/homoserine dehydrogenase (815 aa).

The tract at residues 1-249 (MRVLKFGGTS…VPDARLLPTL (249 aa)) is aspartokinase. The tract at residues 250 to 470 (SYREAMELSY…NNKKVVDMFL (221 aa)) is interface. ACT domains follow at residues 320–392 (VSGP…PIEV) and 401–478 (VVGD…GVGG). Positions 471–815 (VGVGGVGGEL…FADILRTLQH (345 aa)) are homoserine dehydrogenase. Positions 473, 475, 476, 504, and 555 each coordinate NAD(+). Residue V476 participates in NADP(+) binding. V476 lines the NADPH pocket. T555 contributes to the NADP(+) binding site. Positions 555, 556, and 579 each coordinate NADPH. K579 is an NADP(+) binding site. E606, V609, A611, and L613 together coordinate Na(+). Positions 664 and 667 each coordinate NADP(+). L-homoserine-binding residues include E667 and D678. The Proton donor role is filled by K682. NAD(+) is bound at residue G797. G797 lines the NADP(+) pocket. G797 provides a ligand contact to NADPH.

In the N-terminal section; belongs to the aspartokinase family. The protein in the C-terminal section; belongs to the homoserine dehydrogenase family. Homotetramer. It depends on a metal cation as a cofactor.

It catalyses the reaction L-homoserine + NADP(+) = L-aspartate 4-semialdehyde + NADPH + H(+). The catalysed reaction is L-homoserine + NAD(+) = L-aspartate 4-semialdehyde + NADH + H(+). The enzyme catalyses L-aspartate + ATP = 4-phospho-L-aspartate + ADP. It functions in the pathway amino-acid biosynthesis; L-lysine biosynthesis via DAP pathway; (S)-tetrahydrodipicolinate from L-aspartate: step 1/4. It participates in amino-acid biosynthesis; L-methionine biosynthesis via de novo pathway; L-homoserine from L-aspartate: step 1/3. Its pathway is amino-acid biosynthesis; L-methionine biosynthesis via de novo pathway; L-homoserine from L-aspartate: step 3/3. The protein operates within amino-acid biosynthesis; L-threonine biosynthesis; L-threonine from L-aspartate: step 1/5. It functions in the pathway amino-acid biosynthesis; L-threonine biosynthesis; L-threonine from L-aspartate: step 3/5. Its function is as follows. Bifunctional aspartate kinase and homoserine dehydrogenase that catalyzes the first and the third steps toward the synthesis of lysine, methionine and threonine from aspartate. The sequence is that of Bifunctional aspartokinase/homoserine dehydrogenase (thrA) from Haemophilus influenzae (strain ATCC 51907 / DSM 11121 / KW20 / Rd).